Reading from the N-terminus, the 118-residue chain is Putative pterin-4-alpha-carbinolamine dehydratase (118 aa).

This sequence belongs to the pterin-4-alpha-carbinolamine dehydratase family.

The enzyme catalyses (4aS,6R)-4a-hydroxy-L-erythro-5,6,7,8-tetrahydrobiopterin = (6R)-L-erythro-6,7-dihydrobiopterin + H2O. This is Putative pterin-4-alpha-carbinolamine dehydratase from Xanthomonas oryzae pv. oryzae (strain PXO99A).